The sequence spans 202 residues: Histone chaperone ASF1B (202 aa).

The interaction with histone H3 and CHAF1B stretch occupies residues 1-156 (MAKVSVLNVA…TRFHINWDNN (156 aa)). Ser198 carries the phosphoserine; by TLK2 modification.

It belongs to the ASF1 family. As to quaternary structure, interacts with histone H3 (via C-terminus), including histone H3.1, H3.2 and H3.3, and histone H4; the interaction with H3 is direct. Interacts with the CHAF1A, CHAF1B and RBBP4 subunits of the CAF-1 complex. Interacts with HAT1, NASP and TAF1. Found in a soluble complex with NASP and histones H3 and H4; the interaction with NASP is probably indirect and mediated by H3-H4. Interacts with CDAN1. Found in a cytosolic complex with CDAN1, ASF1A, IPO4 and histones H3.1 and H4. Interacts with CREBBP. Phosphorylated by TLK1 and TLK2.

Its subcellular location is the nucleus. The protein resides in the cytoplasm. It localises to the cytosol. Functionally, histone chaperone that facilitates histone deposition and histone exchange and removal during nucleosome assembly and disassembly. Cooperates with chromatin assembly factor 1 (CAF-1) to promote replication-dependent chromatin assembly. Also involved in the nuclear import of the histone H3-H4 dimer together with importin-4 (IPO4): specifically recognizes and binds newly synthesized histones with the monomethylation of H3 'Lys-9' (H3K9me1) and diacetylation at 'Lys-5' and 'Lys-12' of H4 (H4K5ac and H4K12ac) marks in the cytosol. Does not participate in replication-independent nucleosome deposition which is mediated by ASF1A and HIRA. Required for gonad development. In Bos taurus (Bovine), this protein is Histone chaperone ASF1B (ASF1B).